Consider the following 355-residue polypeptide: Protein RecA (355 aa).

Gly65–Thr72 provides a ligand contact to ATP. The interval Ile333–Glu355 is disordered. Residues Lys336–Glu347 show a composition bias toward basic and acidic residues.

This sequence belongs to the RecA family.

It is found in the cytoplasm. Functionally, can catalyze the hydrolysis of ATP in the presence of single-stranded DNA, the ATP-dependent uptake of single-stranded DNA by duplex DNA, and the ATP-dependent hybridization of homologous single-stranded DNAs. It interacts with LexA causing its activation and leading to its autocatalytic cleavage. This chain is Protein RecA, found in Staphylococcus carnosus (strain TM300).